The sequence spans 90 residues: Large ribosomal subunit protein bL27 (90 aa).

Over residues 1–13 (MATKKSGGSSSNG) the composition is skewed to low complexity. The tract at residues 1-20 (MATKKSGGSSSNGRDSRGRR) is disordered.

This sequence belongs to the bacterial ribosomal protein bL27 family.

In Anaplasma marginale (strain Florida), this protein is Large ribosomal subunit protein bL27.